A 241-amino-acid chain; its full sequence is Demethylmenaquinone methyltransferase (241 aa).

Residues Thr-73 and Asp-92 each coordinate S-adenosyl-L-methionine.

Belongs to the class I-like SAM-binding methyltransferase superfamily. MenG/UbiE family.

The enzyme catalyses a 2-demethylmenaquinol + S-adenosyl-L-methionine = a menaquinol + S-adenosyl-L-homocysteine + H(+). It participates in quinol/quinone metabolism; menaquinone biosynthesis; menaquinol from 1,4-dihydroxy-2-naphthoate: step 2/2. Methyltransferase required for the conversion of demethylmenaquinol (DMKH2) to menaquinol (MKH2). The sequence is that of Demethylmenaquinone methyltransferase from Chlorobaculum parvum (strain DSM 263 / NCIMB 8327) (Chlorobium vibrioforme subsp. thiosulfatophilum).